We begin with the raw amino-acid sequence, 435 residues long: ATP-dependent protease ATPase subunit HslU (435 aa).

Residues Ile-18, 60–65 (GVGKTE), Asp-248, Glu-313, and Arg-385 contribute to the ATP site.

Belongs to the ClpX chaperone family. HslU subfamily. In terms of assembly, a double ring-shaped homohexamer of HslV is capped on each side by a ring-shaped HslU homohexamer. The assembly of the HslU/HslV complex is dependent on binding of ATP.

The protein localises to the cytoplasm. ATPase subunit of a proteasome-like degradation complex; this subunit has chaperone activity. The binding of ATP and its subsequent hydrolysis by HslU are essential for unfolding of protein substrates subsequently hydrolyzed by HslV. HslU recognizes the N-terminal part of its protein substrates and unfolds these before they are guided to HslV for hydrolysis. The sequence is that of ATP-dependent protease ATPase subunit HslU from Sinorhizobium medicae (strain WSM419) (Ensifer medicae).